The sequence spans 147 residues: 3-hydroxyacyl-[acyl-carrier-protein] dehydratase FabZ (147 aa).

H49 is a catalytic residue.

This sequence belongs to the thioester dehydratase family. FabZ subfamily.

It localises to the cytoplasm. It catalyses the reaction a (3R)-hydroxyacyl-[ACP] = a (2E)-enoyl-[ACP] + H2O. Its function is as follows. Involved in unsaturated fatty acids biosynthesis. Catalyzes the dehydration of short chain beta-hydroxyacyl-ACPs and long chain saturated and unsaturated beta-hydroxyacyl-ACPs. This is 3-hydroxyacyl-[acyl-carrier-protein] dehydratase FabZ from Alkaliphilus metalliredigens (strain QYMF).